The chain runs to 846 residues: Pseudolaratriene synthase, chloroplastic (846 aa).

The transit peptide at 1 to 58 directs the protein to the chloroplast; it reads MSRFTSATHGLNLSIKMPISVSQVPSIRSNTSKYELQKLRSTGRSVLQTRRQLAIINM. D595, D599, and D747 together coordinate Mg(2+). A DDXXD motif motif is present at residues 595 to 599; sequence DDIYD.

This sequence belongs to the terpene synthase family. Mg(2+) is required as a cofactor. Expressed in young and mature roots. Expressed at low levels in barks.

The protein localises to the plastid. It is found in the chloroplast. The enzyme catalyses (2E,6E,10E)-geranylgeranyl diphosphate = pseudolaratriene + diphosphate. The protein operates within terpene metabolism. Its function is as follows. Converts geranylgeranyl diphosphate to an new 5,7-fused bicyclic diterpene, named pseudolaratriene. Catalyzes the first committed step in pseudolaric acid B (PAB) biosynthesis. PAB exhibits antiproliferative activity by inhibiting microtubule polymerization, and has demonstrated antitumor properties against several cancer types. This chain is Pseudolaratriene synthase, chloroplastic, found in Pseudolarix amabilis (Golden larch).